We begin with the raw amino-acid sequence, 358 residues long: MAPQNLGTFCLLLLYLIGTVIAGRDFYKILGVPRSASIKDIKKAYRKLALQLHPDRNPDDPRAQEKFQDLGAAYEVLSDSEKRKQYDTYGEEGLKDGHQSSHGDIFSHFFGDFGFMFGGTPRQQDRNIPRGSDIIVDLEVTLEEVYAGNFVEVVRNKPVARQAPGKRKCNCRQEMRTTQLGPGRFQMTQEVVCDECPNVKLVNEERTLEVEIEPGVRDGMEYPFIGEGEPHVDGEPGDLRFRIKVVKHSIFERRGDDLYTNVTISLVESLVGFDMDITHLDGHKVHISRDKITRPGAKLWKKGEGLPNFDNNNIKGSLIITFDVDFPKEQLSEEAREGIKQLLKQGSVQKVYNGLQGY.

The N-terminal stretch at 1–22 (MAPQNLGTFCLLLLYLIGTVIA) is a signal peptide. Positions 25 to 90 (DFYKILGVPR…EKRKQYDTYG (66 aa)) constitute a J domain. A Phosphothreonine modification is found at Thr188. The N-linked (GlcNAc...) asparagine glycan is linked to Asn261.

Part of a large chaperone multiprotein complex comprising DNAJB11, HSP90B1, HSPA5, HYOU, PDIA2, PDIA4, PDIA6, PPIB, SDF2L1, UGGT1 and very small amounts of ERP29, but not, or at very low levels, CALR nor CANX. Binds to denatured substrates in an ATP-independent manner. Interacts via the J domain with HSPA5 in an ATP-dependent manner. Post-translationally, contains high-mannose Endo H-sensitive carbohydrates. Cys-169, Cys-171, Cys-193 and Cys-196 form intramolecular disulfide bonds. The preferential partner for each Cys is not known.

It localises to the endoplasmic reticulum lumen. As a co-chaperone for HSPA5 it is required for proper folding, trafficking or degradation of proteins. Binds directly to both unfolded proteins that are substrates for ERAD and nascent unfolded peptide chains, but dissociates from the HSPA5-unfolded protein complex before folding is completed. May help recruiting HSPA5 and other chaperones to the substrate. Stimulates HSPA5 ATPase activity. It is necessary for maturation and correct trafficking of PKD1. In Bos taurus (Bovine), this protein is DnaJ homolog subfamily B member 11 (DNAJB11).